The primary structure comprises 231 residues: Chromosome partition protein MukE (231 aa).

The segment at 195-231 (MIRDGEAMPVEGSLSLKDDSDDNDRTDDTAPETGEDE) is disordered. Residues 213–231 (DSDDNDRTDDTAPETGEDE) are compositionally biased toward acidic residues.

This sequence belongs to the MukE family. Interacts, and probably forms a ternary complex, with MukF and MukB. The complex formation is stimulated by calcium or magnesium.

The protein resides in the cytoplasm. It localises to the nucleoid. In terms of biological role, involved in chromosome condensation, segregation and cell cycle progression. May participate in facilitating chromosome segregation by condensation DNA from both sides of a centrally located replisome during cell division. Probably acts via its interaction with MukB and MukF. The protein is Chromosome partition protein MukE of Pectobacterium atrosepticum (strain SCRI 1043 / ATCC BAA-672) (Erwinia carotovora subsp. atroseptica).